A 124-amino-acid polypeptide reads, in one-letter code: uncharacterized protein (124 aa).

Residues Val83–Ala100 traverse the membrane as a helical segment.

It is found in the membrane. This is an uncharacterized protein from Saccharomyces cerevisiae (strain ATCC 204508 / S288c) (Baker's yeast).